Here is a 283-residue protein sequence, read N- to C-terminus: Hydrogenase expression/formation protein HoxQ (283 aa).

Residues 1-29 (MNDDLPILPPGFGPGSHGEEERPDCPSMP) are disordered.

The protein belongs to the HupH/HyaF family.

The protein is Hydrogenase expression/formation protein HoxQ (hoxQ) of Azotobacter vinelandii.